Consider the following 298-residue polypeptide: DDRGK domain-containing protein 1 (298 aa).

A helical membrane pass occupies residues 1–21; sequence MDIVLYFVAVPILIVLIVSAV. At 22-298 the chain is on the cytoplasmic side; sequence KVRGKTEEDN…NLIPEIHNTA (277 aa). The segment at 71–149 is disordered; it reads NSAYREAADN…EERRKEDKKE (79 aa). Over residues 82-94 the composition is skewed to acidic residues; the sequence is SPVEVEEEYEEAE. Residues 110–149 show a composition bias toward basic and acidic residues; sequence KLEEKQAKRAQREAELEEREERKRTQELREEERRKEDKKE. Residues 181 to 195 carry the UFM1-interacting motif (UFIM) motif; sequence SFVVEEQGEADELTE. Positions 215–259 constitute a PCI domain; it reads VLLEDLASHFGLRTQDAISRLQDLLSDGSITGVIDDRGKFIFITP.

Belongs to the DDRGK1 family. As to quaternary structure, component of the UFM1 ribosome E3 ligase (UREL) complex, composed of ufl1, ddrgk1 and cdk5rap3.

The protein resides in the endoplasmic reticulum membrane. Its function is as follows. Component of the UFM1 ribosome E3 ligase (UREL) complex, a multiprotein complex that catalyzes ufmylation of endoplasmic reticulum-docked proteins. The UREL complex plays a key role in ribosome recycling by mediating mono-ufmylation of the RPL26/uL24 subunit of the 60S ribosome following ribosome dissociation: ufmylation weakens the junction between post-termination 60S subunits and SEC61 translocons, promoting release and recycling of the large ribosomal subunit from the endoplasmic reticulum membrane. Ufmylation of RPL26/uL24 and subsequent 60S ribosome recycling either take place after normal termination of translation or after ribosome stalling during cotranslational translocation at the endoplasmic reticulum. Within the UREL complex, DDRGK1 tethers the complex to the endoplasmic reticulum membrane to restrict its activity to endoplasmic reticulum-docked ribosomes and acts as an ufmylation 'reader': following RPL26/uL24 ufmylation, DDRGK1 specifically binds to ufmylated RPL26/uL24 via its UFIM motif, resulting in stable association between the 60S ribosome and the UREL complex, followed by dissociation of the 60S ribosome subunit from the endoplasmic reticulum membrane. The UREL complex is also involved in reticulophagy in response to endoplasmic reticulum stress by promoting ufmylation of proteins such as CYB5R3 and RPN1, thereby promoting lysosomal degradation of ufmylated proteins. Required for stabilization and ufmylation of ATG9A. The chain is DDRGK domain-containing protein 1 from Osmerus mordax (Rainbow smelt).